Here is a 285-residue protein sequence, read N- to C-terminus: Nucleotide-binding protein Psyr_4150 (285 aa).

8–15 (GRSGSGKS) lines the ATP pocket. 60–63 (DARN) contacts GTP.

It belongs to the RapZ-like family.

In terms of biological role, displays ATPase and GTPase activities. The sequence is that of Nucleotide-binding protein Psyr_4150 from Pseudomonas syringae pv. syringae (strain B728a).